We begin with the raw amino-acid sequence, 168 residues long: Photosystem I assembly protein Ycf3 (168 aa).

TPR repeat units follow at residues 35 to 68, 72 to 105, and 120 to 153; these read AFTYYRDGMSAQSEGNYAEALQNYYEAMRLEIDP, SYILYNIGLIHTSNGEHTKALEYYFRALERNPFL, and GEQAIRQGDSEIAEAWFDQAAEYWKQAIALTPGN.

This sequence belongs to the Ycf3 family.

It localises to the plastid. The protein localises to the chloroplast thylakoid membrane. Functionally, essential for the assembly of the photosystem I (PSI) complex. May act as a chaperone-like factor to guide the assembly of the PSI subunits. The sequence is that of Photosystem I assembly protein Ycf3 from Lactuca sativa (Garden lettuce).